The chain runs to 86 residues: High affinity immunoglobulin epsilon receptor subunit gamma (86 aa).

The N-terminal stretch at 1–18 is a signal peptide; that stretch reads MISAVILFLLLLVEQAAA. Topologically, residues 19–23 are extracellular; sequence LGEPQ. Residues 24-44 traverse the membrane as a helical segment; it reads LCYILDAVLFLYGIVLTLLYC. At 45–86 the chain is on the cytoplasmic side; the sequence is RLKIQVRKAAIASREKADAVYTGLNTRSQETYETLKHEKPPQ. Residues 54–82 enclose the ITAM domain; the sequence is AIASREKADAVYTGLNTRSQETYETLKHE. A phosphotyrosine mark is found at Tyr-65 and Tyr-76. A Phosphothreonine modification is found at Thr-78.

It belongs to the CD3Z/FCER1G family. As to quaternary structure, igE Fc receptor is a tetramer of an alpha chain, a beta chain, and two disulfide linked gamma chains. Associates with FCGR1A; forms a functional signaling complex. The signaling subunit of immunoglobulin gamma (IgG) Fc receptor complex. As a homodimer or a heterodimer of CD247 and FCER1G, associates with the ligand binding subunit FCGR3A to form a functional receptor complex. Associates with CLEC6A. Interacts with CLEC4E. Interacts (via ITAM domain) with SYK (via SH2 domains); activates SYK, enabling integrin-mediated activation of neutrophils and macrophages. Interacts with CSF2RB and recruits SYK in response to IL3 stimulation; this interaction is direct. Interacts with CD300LH; the interaction may be indirect. Interacts with CD300LD. Interacts with TARM1. In terms of tissue distribution, expressed in mast cells (at protein level). Expressed in basophils (at protein level).

It localises to the cell membrane. Its function is as follows. Adapter protein containing an immunoreceptor tyrosine-based activation motif (ITAM) that transduces activation signals from various immunoreceptors. As a component of the high-affinity immunoglobulin E (IgE) receptor, mediates allergic inflammatory signaling in mast cells. As a constitutive component of interleukin-3 receptor complex, selectively mediates interleukin 4/IL4 production by basophils, priming T-cells toward effector T-helper 2 subset. Associates with pattern recognition receptors CLEC4D and CLEC4E to form a functional signaling complex in myeloid cells. Binding of mycobacterial trehalose 6,6'-dimycolate (TDM) to this receptor complex leads to phosphorylation of ITAM, triggering activation of SYK, CARD9 and NF-kappa-B, consequently driving maturation of antigen-presenting cells and shaping antigen-specific priming of T-cells toward effector T-helper 1 and T-helper 17 cell subtypes. May function cooperatively with other activating receptors. Functionally linked to integrin beta-2/ITGB2-mediated neutrophil activation. Also involved in integrin alpha-2/ITGA2-mediated platelet activation. In Mus musculus (Mouse), this protein is High affinity immunoglobulin epsilon receptor subunit gamma.